We begin with the raw amino-acid sequence, 469 residues long: Light-independent protochlorophyllide reductase subunit N (469 aa).

[4Fe-4S] cluster contacts are provided by C24, C49, and C109.

It belongs to the BchN/ChlN family. In terms of assembly, protochlorophyllide reductase is composed of three subunits; ChlL, ChlN and ChlB. Forms a heterotetramer of two ChlB and two ChlN subunits. [4Fe-4S] cluster is required as a cofactor.

The enzyme catalyses chlorophyllide a + oxidized 2[4Fe-4S]-[ferredoxin] + 2 ADP + 2 phosphate = protochlorophyllide a + reduced 2[4Fe-4S]-[ferredoxin] + 2 ATP + 2 H2O. It functions in the pathway porphyrin-containing compound metabolism; chlorophyll biosynthesis (light-independent). Component of the dark-operative protochlorophyllide reductase (DPOR) that uses Mg-ATP and reduced ferredoxin to reduce ring D of protochlorophyllide (Pchlide) to form chlorophyllide a (Chlide). This reaction is light-independent. The NB-protein (ChlN-ChlB) is the catalytic component of the complex. In Synechocystis sp. (strain ATCC 27184 / PCC 6803 / Kazusa), this protein is Light-independent protochlorophyllide reductase subunit N.